The following is a 542-amino-acid chain: Chaperonin GroEL (542 aa).

ATP contacts are provided by residues 29-32, 86-90, glycine 413, 476-478, and aspartate 492; these read TLGP, DGTTT, and NAA. Residues 522–542 form a disordered region; the sequence is PDENGPAAVPDMGMGGMGGMM.

The protein belongs to the chaperonin (HSP60) family. In terms of assembly, forms a cylinder of 14 subunits composed of two heptameric rings stacked back-to-back. Interacts with the co-chaperonin GroES.

Its subcellular location is the cytoplasm. The catalysed reaction is ATP + H2O + a folded polypeptide = ADP + phosphate + an unfolded polypeptide.. Functionally, together with its co-chaperonin GroES, plays an essential role in assisting protein folding. The GroEL-GroES system forms a nano-cage that allows encapsulation of the non-native substrate proteins and provides a physical environment optimized to promote and accelerate protein folding. This is Chaperonin GroEL from Listeria monocytogenes serotype 4b (strain CLIP80459).